A 79-amino-acid chain; its full sequence is Defensin-1 (79 aa).

The signal sequence occupies residues 1–23; sequence MKFLNVVAIALLVVACLAVYSNA. 3 disulfide bridges follow: Cys-42/Cys-69, Cys-55/Cys-75, and Cys-59/Cys-77.

This sequence belongs to the invertebrate defensin family. Type 1 subfamily.

It is found in the secreted. In Stomoxys calcitrans (Stable fly), this protein is Defensin-1 (SMD1).